The chain runs to 182 residues: Adenine phosphoribosyltransferase (182 aa).

Belongs to the purine/pyrimidine phosphoribosyltransferase family. In terms of assembly, homodimer.

The protein resides in the cytoplasm. The enzyme catalyses AMP + diphosphate = 5-phospho-alpha-D-ribose 1-diphosphate + adenine. It participates in purine metabolism; AMP biosynthesis via salvage pathway; AMP from adenine: step 1/1. Its function is as follows. Catalyzes a salvage reaction resulting in the formation of AMP, that is energically less costly than de novo synthesis. The chain is Adenine phosphoribosyltransferase from Bordetella pertussis (strain Tohama I / ATCC BAA-589 / NCTC 13251).